The sequence spans 633 residues: DNA-directed RNA polymerase subunit beta' (633 aa).

The Zn(2+) site is built by Cys72, Cys74, Cys87, and Cys90. Asp468, Asp470, and Asp472 together coordinate Mg(2+).

This sequence belongs to the RNA polymerase beta' chain family. RpoC1 subfamily. In plastids the minimal PEP RNA polymerase catalytic core is composed of four subunits: alpha, beta, beta', and beta''. When a (nuclear-encoded) sigma factor is associated with the core the holoenzyme is formed, which can initiate transcription. Requires Mg(2+) as cofactor. The cofactor is Zn(2+).

The protein resides in the plastid. It is found in the chloroplast. It catalyses the reaction RNA(n) + a ribonucleoside 5'-triphosphate = RNA(n+1) + diphosphate. DNA-dependent RNA polymerase catalyzes the transcription of DNA into RNA using the four ribonucleoside triphosphates as substrates. In Cyanidium caldarium (Red alga), this protein is DNA-directed RNA polymerase subunit beta'.